The sequence spans 469 residues: DNA polymerase delta subunit 2 (469 aa).

Residue Met1 is modified to N-acetylmethionine. Ser257 is modified (phosphoserine).

The protein belongs to the DNA polymerase delta/II small subunit family. Component of both the DNA polymerase delta and DNA polymerase zeta complexes. Component of the tetrameric DNA polymerase delta complex (Pol-delta4), which consists of POLD1/p125, POLD2/p50, POLD3/p66/p68 and POLD4/p12, with POLD1 bearing DNA polymerase and 3' to 5' proofreading exonuclease activities. Within Pol-delta4, directly interacts with POLD1, POLD3 and POLD4. Following stress caused by DNA damaging agents or by replication stress, POLD4 is degraded and Pol-delta4 is converted into a trimeric form of the complex (Pol-delta3), which consists of POLD1, POLD2 and POLD3. Pol-delta3 is the major form occurring at S phase replication sites, as well as DNA damage sites. Also observed as a dimeric complex with POLD2 (Pol-delta2 complex). Pol-delta2 is relatively insensitive to the PCNA stimulation (2-5-fold) compared to Pol-delta4 that is stimulated by over 50-fold. Contrary to the other components of Pol-delta4, does not directly interact with PCNA. As POLD1 and POLD4, directly interacts with WRNIP1; this interaction stimulates DNA polymerase delta-mediated DNA synthesis, independently of the presence of PCNA. This stimulation may be due predominantly to an increase of initiation frequency and also to increased processivity. Directly interacts with POLDIP2 and POLDIP3. Directly interacts with KCTD13/PDIP1; in the presence of PCNA, this interaction may stimulate DNA polymerase activity. Component of the tetrameric Pol-zeta complex (Pol-zeta4), which consists of REV3L, MAD2L2, POLD2 and POLD3, with REV3L bearing DNA polymerase catalytic activity. Interacts with KCTD10.

The protein localises to the nucleus. Accessory component of both the DNA polymerase delta complex and the DNA polymerase zeta complex. As a component of the trimeric and tetrameric DNA polymerase delta complexes (Pol-delta3 and Pol-delta4, respectively), plays a role in high fidelity genome replication, including in lagging strand synthesis, and repair. Pol-delta3 and Pol-delta4 are characterized by the absence or the presence of POLD4. They exhibit differences in catalytic activity. Most notably, Pol-delta3 shows higher proofreading activity than Pol-delta4. Although both Pol-delta3 and Pol-delta4 process Okazaki fragments in vitro, Pol-delta3 may also be better suited to fulfill this task, exhibiting near-absence of strand displacement activity compared to Pol-delta4 and stalling on encounter with the 5'-blocking oligonucleotides. Pol-delta3 idling process may avoid the formation of a gap, while maintaining a nick that can be readily ligated. Along with DNA polymerase kappa, DNA polymerase delta carries out approximately half of nucleotide excision repair (NER) synthesis following UV irradiation. Under conditions of DNA replication stress, required for the repair of broken replication forks through break-induced replication (BIR). Involved in the translesion synthesis (TLS) of templates carrying O6-methylguanine or abasic sites performed by Pol-delta4, independently of DNA polymerase zeta (REV3L) or eta (POLH). Facilitates abasic site bypass by DNA polymerase delta by promoting extension from the nucleotide inserted opposite the lesion. Also involved in TLS as a component of the DNA polymerase zeta complex. Along with POLD3, dramatically increases the efficiency and processivity of DNA synthesis of the DNA polymerase zeta complex compared to the minimal zeta complex, consisting of only REV3L and REV7. The chain is DNA polymerase delta subunit 2 (Pold2) from Mus musculus (Mouse).